Here is a 431-residue protein sequence, read N- to C-terminus: Levansucrase LscB (431 aa).

Sucrose is bound by residues W61, D62, A148, R218, and D219. Catalysis depends on D62, which acts as the Nucleophile. The Proton donor/acceptor role is filled by E303.

Belongs to the glycosyl hydrolase 68 family.

It is found in the secreted. The enzyme catalyses [6)-beta-D-fructofuranosyl-(2-&gt;](n) alpha-D-glucopyranoside + sucrose = [6)-beta-D-fructofuranosyl-(2-&gt;](n+1) alpha-D-glucopyranoside + D-glucose. Functionally, catalyzes the synthesis of levan, a fructose polymer, by transferring the fructosyl moiety from sucrose to a growing acceptor molecule. The sequence is that of Levansucrase LscB from Pseudomonas savastanoi pv. glycinea (Pseudomonas syringae pv. glycinea).